Here is a 186-residue protein sequence, read N- to C-terminus: Elongation factor P (186 aa).

The protein belongs to the elongation factor P family.

It localises to the cytoplasm. The protein operates within protein biosynthesis; polypeptide chain elongation. Involved in peptide bond synthesis. Stimulates efficient translation and peptide-bond synthesis on native or reconstituted 70S ribosomes in vitro. Probably functions indirectly by altering the affinity of the ribosome for aminoacyl-tRNA, thus increasing their reactivity as acceptors for peptidyl transferase. This chain is Elongation factor P, found in Shewanella woodyi (strain ATCC 51908 / MS32).